Consider the following 332-residue polypeptide: 5-dehydro-2-deoxygluconokinase 2 (332 aa).

The protein belongs to the carbohydrate kinase PfkB family.

The catalysed reaction is 5-dehydro-2-deoxy-D-gluconate + ATP = 6-phospho-5-dehydro-2-deoxy-D-gluconate + ADP + H(+). It participates in polyol metabolism; myo-inositol degradation into acetyl-CoA; acetyl-CoA from myo-inositol: step 5/7. In terms of biological role, catalyzes the phosphorylation of 5-dehydro-2-deoxy-D-gluconate (2-deoxy-5-keto-D-gluconate or DKG) to 6-phospho-5-dehydro-2-deoxy-D-gluconate (DKGP). The sequence is that of 5-dehydro-2-deoxygluconokinase 2 from Bacillus cereus (strain ZK / E33L).